A 234-amino-acid polypeptide reads, in one-letter code: Accessory gland protein Acp29AB (234 aa).

Residues 1–21 (MYATNLLYLLALWNLWLVSGG) form the signal peptide. N-linked (GlcNAc...) asparagine glycans are attached at residues Asn-29, Asn-61, Asn-127, and Asn-164. Residues 137-234 (VTCREMNGHL…SFVCQANQWA (98 aa)) enclose the C-type lectin domain. 2 disulfide bridges follow: Cys-139/Cys-228 and Cys-207/Cys-220.

The protein resides in the secreted. Functionally, responsible for physiological and behavioral changes in mated female flies. The protein is Accessory gland protein Acp29AB (Acp29AB) of Drosophila simulans (Fruit fly).